Reading from the N-terminus, the 1209-residue chain is Calcium-activated potassium channel subunit alpha-1 (1209 aa).

Residues 1-23 are compositionally biased toward gly residues; sequence MANGGGGGGGSSGGGGGGGGGSG. Residues 1 to 61 are disordered; that stretch reads MANGGGGGGG…SSSSSSSSSV (61 aa). Residues 1–86 lie on the Extracellular side of the membrane; sequence MANGGGGGGG…VPCDSRGQRM (86 aa). Over residues 25-39 the composition is skewed to polar residues; it reads RMSSNIHANNLSLDA. Residues 40 to 60 are compositionally biased toward low complexity; sequence SSSSSSSSSSSSSSSSSSSSS. A helical transmembrane segment spans residues 87–107; that stretch reads WWAFLASSMVTFFGGLFIILL. Topologically, residues 108 to 178 are cytoplasmic; that stretch reads WRTLKYLWTV…MISAQTLTGR (71 aa). S-palmitoyl cysteine attachment occurs at residues C118, C119, and C121. Residues 179–199 form a helical membrane-spanning segment; that stretch reads VLVVLVFALSIGALVIYFIDS. Over 200-214 the chain is Extracellular; that stretch reads SNPIESCQNFYKDFT. A helical membrane pass occupies residues 215–235; that stretch reads LQIDMAFNVFFLLYFGLRFIA. Over 236 to 239 the chain is Cytoplasmic; sequence ANDK. The helical transmembrane segment at 240–260 threads the bilayer; sequence LWFWLEVNSVVDFFTVPPVFV. At 261-264 the chain is on the extracellular side; that stretch reads SVYL. Residues 265 to 285 form a helical; Voltage-sensor membrane-spanning segment; it reads NRSWLGLRFLRALRLIQFSEI. The Cytoplasmic segment spans residues 286-300; sequence LQFLNILKTSNSIKL. Residues 301 to 321 form a helical membrane-spanning segment; the sequence is VNLLSIFISTWLTAAGFIHLV. The Extracellular segment spans residues 322–335; sequence ENSGDPWENFQNNQ. The segment at residues 336–358 is an intramembrane region (pore-forming); the sequence is ALTYWECVYLLMVTMSTVGYGDV. The Selectivity for potassium motif lies at 352–355; it reads TVGY. The Extracellular portion of the chain corresponds to 359-367; it reads YAKTTLGRL. A helical membrane pass occupies residues 368–388; that stretch reads FMVFFILGGLAMFASYVPEII. The Cytoplasmic segment spans residues 389–1209; the sequence is ELIGNRKKYG…KQNRKEMVYR (821 aa). One can recognise an RCK N-terminal 1 domain in the interval 407 to 549; it reads RKHIVVCGHI…WNWKEGDDAI (143 aa). Positions 439, 462, and 464 each coordinate Mg(2+). Positions 556-576 are segment S7; sequence LGFIAQSCLAQGLSTMLANLF. The interval 613-633 is segment S8; it reads LSFPTVCELCFVKLKLLMIAI. D670 is modified (phosphothreonine). K672 is subject to Phosphoserine. The segment at 681–685 is heme-binding motif; that stretch reads CKACH. The segment at 703–733 is disordered; the sequence is EDEQPPTLSPKKKQRNGGMRNSPNTSPKLMR. T709 bears the Phosphothreonine mark. S711, S724, and S728 each carry phosphoserine. Residues 783–803 form a segment S9 region; sequence VLSGHVVVCIFGDVSSALIGL. One can recognise an RCK N-terminal 2 domain in the interval 785–929; the sequence is SGHVVVCIFG…MDRSSPDNSP (145 aa). A Phosphothreonine modification is found at T916. S924 and S928 each carry phosphoserine. Residues 976–998 carry the Calcium bowl motif; sequence TELVNDTNVQFLDQDDDDDPDTE. Residues Q985, D988, D991, and D993 each coordinate Ca(2+). The segment at 1005–1025 is segment S10; the sequence is FACGTAFAVSVLDSLMSATYF. A compositionally biased stretch (low complexity) spans 1159–1184; sequence RASLSHSSHSSQSSSKKSSSVHSIPS. The tract at residues 1159–1209 is disordered; it reads RASLSHSSHSSQSSSKKSSSVHSIPSTANRPNRPKSRESRDKQNRKEMVYR. Residues 1193 to 1209 show a composition bias toward basic and acidic residues; that stretch reads KSRESRDKQNRKEMVYR. Residues S1194 and S1197 each carry the phosphoserine modification.

Belongs to the potassium channel family. Calcium-activated (TC 1.A.1.3) subfamily. KCa1.1/KCNMA1 sub-subfamily. In terms of assembly, homotetramer; which constitutes the calcium-activated potassium channel. Interacts with beta subunits KCNMB1, KCNMB2, KCNMB3 and KCNMB4. Interacts with gamma subunits LRRC26, LRRC38, LRRC52 and LRRC55. Beta and gamma subunits are accessory, and modulate its activity. Interacts with RAB11B. In terms of processing, phosphorylated. Phosphorylation by kinases such as PKA and/or PKG. In smooth muscles, phosphorylation affects its activity. Post-translationally, palmitoylation by ZDHHC22 and ZDHHC23 within the intracellular linker between the S0 and S1 transmembrane domains regulates localization to the plasma membrane. Depalmitoylated by LYPLA1 and LYPLAL1, leading to retard exit from the trans-Golgi network.

It is found in the cell membrane. The enzyme catalyses K(+)(in) = K(+)(out). Its activity is regulated as follows. Ethanol and carbon monoxide-bound heme increase channel activation. Heme inhibits channel activation. Its function is as follows. Potassium channel activated by both membrane depolarization or increase in cytosolic Ca(2+) that mediates export of K(+). It is also activated by the concentration of cytosolic Mg(2+). Its activation dampens the excitatory events that elevate the cytosolic Ca(2+) concentration and/or depolarize the cell membrane. It therefore contributes to repolarization of the membrane potential. Plays a key role in controlling excitability in a number of systems, such as regulation of the contraction of smooth muscle, the tuning of hair cells in the cochlea, regulation of transmitter release, and innate immunity. In smooth muscles, its activation by high level of Ca(2+), caused by ryanodine receptors in the sarcoplasmic reticulum, regulates the membrane potential. In cochlea cells, its number and kinetic properties partly determine the characteristic frequency of each hair cell and thereby helps to establish a tonotopic map. Kinetics of KCNMA1 channels are determined by alternative splicing, phosphorylation status and its combination with modulating beta subunits. Highly sensitive to both iberiotoxin (IbTx) and charybdotoxin (CTX). Functionally, potassium channel activated by both membrane depolarization or increase in cytosolic Ca(2+) that mediates export of K(+). The protein is Calcium-activated potassium channel subunit alpha-1 (Kcnma1) of Mus musculus (Mouse).